A 240-amino-acid chain; its full sequence is ATP-dependent dethiobiotin synthetase BioD (240 aa).

13 to 18 contributes to the ATP binding site; that stretch reads EVGKTV. Mg(2+) is bound at residue Thr-17. Residue Lys-38 is part of the active site. A substrate-binding site is contributed by Ser-42. ATP contacts are provided by residues Asp-55, 116–119, 176–177, and 205–207; these read EGAG, ND, and PWL. Positions 55 and 116 each coordinate Mg(2+).

It belongs to the dethiobiotin synthetase family. Homodimer. Requires Mg(2+) as cofactor.

Its subcellular location is the cytoplasm. The catalysed reaction is (7R,8S)-7,8-diammoniononanoate + CO2 + ATP = (4R,5S)-dethiobiotin + ADP + phosphate + 3 H(+). Its pathway is cofactor biosynthesis; biotin biosynthesis; biotin from 7,8-diaminononanoate: step 1/2. Its function is as follows. Catalyzes a mechanistically unusual reaction, the ATP-dependent insertion of CO2 between the N7 and N8 nitrogen atoms of 7,8-diaminopelargonic acid (DAPA, also called 7,8-diammoniononanoate) to form a ureido ring. This chain is ATP-dependent dethiobiotin synthetase BioD, found in Pseudescherichia vulneris (Escherichia vulneris).